The chain runs to 393 residues: Nucleoside permease NupC (393 aa).

9 helical membrane passes run Tyr3–Gly23, Ile32–Gly52, Thr87–Leu107, Leu168–Leu188, Glu191–Ile211, Val249–Phe269, Val272–Val292, Ala334–Gly354, and Leu372–Ile392.

It belongs to the concentrative nucleoside transporter (CNT) (TC 2.A.41) family.

The protein localises to the cell membrane. Its function is as follows. Transport of the pyrimidine nucleoside uridine. The protein is Nucleoside permease NupC of Bacillus subtilis (strain 168).